Reading from the N-terminus, the 1387-residue chain is MAERANLVFHNKVIDGTAIKRLISRLIDRFGMAYTSHILDQVKTLGFQQATATSISLGIDDLLTIPSKGWLVQDAEQQSLILEKHHHYGNVHAVEKLRQSIEIWYATSEYLRQEMNPNFRVTDPFNPVHIMSFSGARGNASQVHQLVGMRGLMSDPQGQMIDLPIQSNLREGLSLTEYIISCYGARKGVVDTAVRTSDAGYLTRRLVEVVQHIVVRRTDCGTIRGISVSPKNRTMPERIFIQTLIGRVLADDIYMGPRCIAIRNQDIGIGLVNRFITFRTQSISIRTPFTCRSTSWICRLCYGRSPTHGDLVELGEAVGIIAGQSIGEPGTQLTLRTFHTGGVFTGGTAEHVRSPSNGKIKFNEDLVHPTRTRHGHPAFLCYIDLSVVIESEDIIHNVTIPPKSFLLVQNDQYVESEQVIAEIRAGTYTLNYKERVRKHIYSNSEGEMHWSTDVYHAPEFTYSNVHLLPKTSHLWILSGGSSRSSLVPFSLHKDQDQMNIHSLSVEQESISSLAVNNDQGRHKFFSSNFSDKKKCGIPDYSEFHRILDTGHCNLIYFASLHENSDLLAKRRRNRFIIPFQSIQEQEKELMPRSGISIEIPINGIFRRNSILAFFDDPRYRRKSSGILKYGTIGAHSIVKKEDVIEYRGVKKFKTKYQMKVDRFFFIPEEVHILPESSSIMVRNNSIIGVDTRITLNIRSQVGGLVRVERKKKSIELQIFSGDIHFPGKTDKISRHSGILIPPGRGKTNSKESKKLKNWIYVQRITPTKKKYFVLVRPVATYEIADGINLATLFPQDLFREKDNMQLRVVNYILYGNGKPVRGIFDTSIQLVRTCLVLNWDQDNKSSSVEEVRTFFVEVSTNSLIRDFLRIDLVKSQSHISYIRKRNDPSGSGLISDNGSDRINPFYYKERIQQSLSKNHGTIRTLLNRNKECQSLIILSSSNCFQMGPFNHVKYHNVIKQSIKKDPLIPIRNSLGPVGTAIQIANFYSIYHLITHNQISVTKYFQLDNLNQIFEVIKYYLMDETGRVYNPDPCSNIILNPFNLNWYFLYQNYHHNYCEETSTIISLGQFICENVCLAKNGPHLKSGQVLIVQVDSVVIRSAKPYLATPGATVHGHYGEILYEGDTLVTFIYEKSRSGDITQGLPKVEQVLEVRSIDSISLNLEKRVEGWNKRITRILGIPWGFLIGAELTIVQSRISLVNKIQKVYRSQGVQIHNRHIEIIVRQITSKVLVSEEGMSNVFLPGELIGLLRAERTGRALEEAICYRAILLGITRASLNTQSFISEASFQETARVLAKAALRGRIDWLKGLKENVVLGGMIPAGTGFKGLVHCSRQHTSILLETKKKNLYLFEGEMRDIFFHHRELFDSCISKNLHNTSERSFIGLNDS.

Zn(2+)-binding residues include Cys220, Cys291, Cys298, and Cys301.

The protein belongs to the RNA polymerase beta' chain family. RpoC2 subfamily. In plastids the minimal PEP RNA polymerase catalytic core is composed of four subunits: alpha, beta, beta', and beta''. When a (nuclear-encoded) sigma factor is associated with the core the holoenzyme is formed, which can initiate transcription. Zn(2+) serves as cofactor.

Its subcellular location is the plastid. It is found in the chloroplast. It carries out the reaction RNA(n) + a ribonucleoside 5'-triphosphate = RNA(n+1) + diphosphate. In terms of biological role, DNA-dependent RNA polymerase catalyzes the transcription of DNA into RNA using the four ribonucleoside triphosphates as substrates. This Carica papaya (Papaya) protein is DNA-directed RNA polymerase subunit beta''.